A 118-amino-acid chain; its full sequence is Beta-2-microglobulin (118 aa).

An N-terminal signal peptide occupies residues 1–21; that stretch reads MESRWGIVVIGLLCCVSWVEA. Positions 26-113 constitute an Ig-like C1-type domain; sequence PKIQVYTRSP…THNSVTKSVK (88 aa). Cys46 and Cys101 are disulfide-bonded.

The protein belongs to the beta-2-microglobulin family. In terms of assembly, heterodimer of an alpha chain and a beta chain. Beta-2-microglobulin is the beta-chain of major histocompatibility complex class I molecules.

It localises to the secreted. Its function is as follows. Component of the class I major histocompatibility complex (MHC). Involved in the presentation of peptide antigens to the immune system. This Tachyglossus aculeatus aculeatus (Southeast Australian short-beaked echidna) protein is Beta-2-microglobulin (B2M).